A 180-amino-acid chain; its full sequence is Large ribosomal subunit protein uL5 (180 aa).

It belongs to the universal ribosomal protein uL5 family. As to quaternary structure, part of the 50S ribosomal subunit; part of the 5S rRNA/L5/L18/L25 subcomplex. Contacts the 5S rRNA and the P site tRNA. Forms a bridge to the 30S subunit in the 70S ribosome.

Functionally, this is one of the proteins that bind and probably mediate the attachment of the 5S RNA into the large ribosomal subunit, where it forms part of the central protuberance. In the 70S ribosome it contacts protein S13 of the 30S subunit (bridge B1b), connecting the 2 subunits; this bridge is implicated in subunit movement. Contacts the P site tRNA; the 5S rRNA and some of its associated proteins might help stabilize positioning of ribosome-bound tRNAs. The polypeptide is Large ribosomal subunit protein uL5 (Streptococcus thermophilus (strain CNRZ 1066)).